A 95-amino-acid polypeptide reads, in one-letter code: Aspartyl/glutamyl-tRNA(Asn/Gln) amidotransferase subunit C (95 aa).

Belongs to the GatC family. In terms of assembly, heterotrimer of A, B and C subunits.

It catalyses the reaction L-glutamyl-tRNA(Gln) + L-glutamine + ATP + H2O = L-glutaminyl-tRNA(Gln) + L-glutamate + ADP + phosphate + H(+). It carries out the reaction L-aspartyl-tRNA(Asn) + L-glutamine + ATP + H2O = L-asparaginyl-tRNA(Asn) + L-glutamate + ADP + phosphate + 2 H(+). In terms of biological role, allows the formation of correctly charged Asn-tRNA(Asn) or Gln-tRNA(Gln) through the transamidation of misacylated Asp-tRNA(Asn) or Glu-tRNA(Gln) in organisms which lack either or both of asparaginyl-tRNA or glutaminyl-tRNA synthetases. The reaction takes place in the presence of glutamine and ATP through an activated phospho-Asp-tRNA(Asn) or phospho-Glu-tRNA(Gln). The chain is Aspartyl/glutamyl-tRNA(Asn/Gln) amidotransferase subunit C from Halorhodospira halophila (strain DSM 244 / SL1) (Ectothiorhodospira halophila (strain DSM 244 / SL1)).